The primary structure comprises 268 residues: WUSCHEL-related homeobox 11 (268 aa).

The interval 1–35 is disordered; sequence MDQEQTPHSPTRHSRSPPSSASGSTSAEPVRSRWS. A compositionally biased stretch (low complexity) spans 16-27; sequence SPPSSASGSTSA. Residues 29–93 constitute a DNA-binding region (homeobox; WUS-type); it reads PVRSRWSPKP…NRRSRSRRRQ (65 aa).

The protein belongs to the WUS homeobox family.

It is found in the nucleus. Functionally, transcription factor which may be involved in developmental processes. The sequence is that of WUSCHEL-related homeobox 11 (WOX11) from Arabidopsis thaliana (Mouse-ear cress).